The sequence spans 239 residues: 1-(5-phosphoribosyl)-5-[(5-phosphoribosylamino)methylideneamino] imidazole-4-carboxamide isomerase (239 aa).

Catalysis depends on Asp-12, which acts as the Proton acceptor. The active-site Proton donor is the Asp-133.

It belongs to the HisA/HisF family.

Its subcellular location is the cytoplasm. It catalyses the reaction 1-(5-phospho-beta-D-ribosyl)-5-[(5-phospho-beta-D-ribosylamino)methylideneamino]imidazole-4-carboxamide = 5-[(5-phospho-1-deoxy-D-ribulos-1-ylimino)methylamino]-1-(5-phospho-beta-D-ribosyl)imidazole-4-carboxamide. The protein operates within amino-acid biosynthesis; L-histidine biosynthesis; L-histidine from 5-phospho-alpha-D-ribose 1-diphosphate: step 4/9. This Sulfurihydrogenibium sp. (strain YO3AOP1) protein is 1-(5-phosphoribosyl)-5-[(5-phosphoribosylamino)methylideneamino] imidazole-4-carboxamide isomerase.